A 435-amino-acid polypeptide reads, in one-letter code: Actin-like protein 7A (435 aa).

2 disordered regions span residues 1–20 (MWAP…VGNQ) and 29–65 (QTAS…ERPK). The segment at 31–51 (ASLRDGPAKRAVWVRRRSSEP) is required for interaction with TES. The span at 47-65 (RSSEPQEPTESKAAKERPK) shows a compositional bias: basic and acidic residues.

This sequence belongs to the actin family. In terms of assembly, interacts (via N-terminus) with TES (via LIM domain 2). Heterodimer with TES; the heterodimer interacts with ENAH to form a heterotrimer. Interacts with ACTL9. Interacts with CYLC1; the interaction may be relevant for proper acrosome attachment to the nuclear envelope.

Its subcellular location is the cytoplasm. The protein localises to the cytoskeleton. It localises to the golgi apparatus. It is found in the nucleus. In terms of biological role, essential for normal spermatogenesis and male fertility. Required for normal sperm head morphology, acroplaxome formation, acrosome attachment, and acrosome granule stability. May anchor and stabilize acrosomal adherence to the acroplaxome at least in part by facilitating the presence of F-actin in the subacrosomal space. May play an important role in formation and fusion of Golgi-derived vesicles during acrosome biogenesis. The chain is Actin-like protein 7A (ACTL7A) from Macaca fascicularis (Crab-eating macaque).